The sequence spans 509 residues: Maturase K (509 aa).

This sequence belongs to the intron maturase 2 family. MatK subfamily.

The protein resides in the plastid. It is found in the chloroplast. Its function is as follows. Usually encoded in the trnK tRNA gene intron. Probably assists in splicing its own and other chloroplast group II introns. The polypeptide is Maturase K (Nicotiana paniculata).